The primary structure comprises 814 residues: Acyl-coenzyme A dehydrogenase (814 aa).

The Proton acceptor role is filled by Glu-497.

It belongs to the acyl-CoA dehydrogenase family. FAD is required as a cofactor.

The catalysed reaction is a medium-chain 2,3-saturated fatty acyl-CoA + oxidized [electron-transfer flavoprotein] + H(+) = a medium-chain (2E)-enoyl-CoA + reduced [electron-transfer flavoprotein]. It catalyses the reaction a long-chain 2,3-saturated fatty acyl-CoA + oxidized [electron-transfer flavoprotein] + H(+) = a long-chain (2E)-enoyl-CoA + reduced [electron-transfer flavoprotein]. It participates in lipid metabolism; fatty acid beta-oxidation. Its function is as follows. Catalyzes the dehydrogenation of acyl-coenzymes A (acyl-CoAs) to 2-enoyl-CoAs, the first step of the beta-oxidation cycle of fatty acid degradation. Is required for the utilization of medium- and long-chain fatty acids as sole carbon sources for growth. Is needed for bacterial survival during carbone-source starvation. This chain is Acyl-coenzyme A dehydrogenase (fadE), found in Salmonella typhi.